The following is a 277-amino-acid chain: Large ribosomal subunit protein uL2 (277 aa).

The disordered stretch occupies residues 212 to 277 (RWRGKRPHVR…KFIVRGRKSK (66 aa)). Residues 254–277 (TAGKKTRDKKKASTKFIVRGRKSK) are compositionally biased toward basic residues.

It belongs to the universal ribosomal protein uL2 family. As to quaternary structure, part of the 50S ribosomal subunit. Forms a bridge to the 30S subunit in the 70S ribosome.

Functionally, one of the primary rRNA binding proteins. Required for association of the 30S and 50S subunits to form the 70S ribosome, for tRNA binding and peptide bond formation. It has been suggested to have peptidyltransferase activity; this is somewhat controversial. Makes several contacts with the 16S rRNA in the 70S ribosome. The protein is Large ribosomal subunit protein uL2 of Leuconostoc citreum (strain KM20).